We begin with the raw amino-acid sequence, 257 residues long: Phosphate import ATP-binding protein PstB (257 aa).

Residues 4–246 form the ABC transporter domain; it reads LKLNDVNIYY…KKIFENPDQK (243 aa). Residue 36-43 participates in ATP binding; sequence GPSGCGKS.

Belongs to the ABC transporter superfamily. Phosphate importer (TC 3.A.1.7) family. In terms of assembly, the complex is composed of two ATP-binding proteins (PstB), two transmembrane proteins (PstC and PstA) and a solute-binding protein (PstS).

Its subcellular location is the cell membrane. The catalysed reaction is phosphate(out) + ATP + H2O = ADP + 2 phosphate(in) + H(+). In terms of biological role, part of the ABC transporter complex PstSACB involved in phosphate import. Responsible for energy coupling to the transport system. The chain is Phosphate import ATP-binding protein PstB from Corynebacterium glutamicum (strain ATCC 13032 / DSM 20300 / JCM 1318 / BCRC 11384 / CCUG 27702 / LMG 3730 / NBRC 12168 / NCIMB 10025 / NRRL B-2784 / 534).